The sequence spans 424 residues: CUGBP Elav-like family member 4 (424 aa).

Positions 8 to 27 (VANGQPDNSSLSSNPTGHMN) are disordered. Over residues 9-24 (ANGQPDNSSLSSNPTG) the composition is skewed to polar residues. RRM domains are found at residues 47 to 128 (IKLF…PADS) and 342 to 417 (PQPP…LKRP).

The protein belongs to the CELF/BRUNOL family.

It is found in the nucleus. The protein localises to the cytoplasm. RNA-binding protein that may be implicated in the regulation of pre-mRNA alternative splicing. The protein is CUGBP Elav-like family member 4 (celf4) of Xenopus tropicalis (Western clawed frog).